Consider the following 258-residue polypeptide: Phosphate import ATP-binding protein PstB (258 aa).

The region spanning L5 to K247 is the ABC transporter domain. G37–S44 lines the ATP pocket.

The protein belongs to the ABC transporter superfamily. Phosphate importer (TC 3.A.1.7) family. As to quaternary structure, the complex is composed of two ATP-binding proteins (PstB), two transmembrane proteins (PstC and PstA) and a solute-binding protein (PstS).

Its subcellular location is the cell membrane. It carries out the reaction phosphate(out) + ATP + H2O = ADP + 2 phosphate(in) + H(+). Its function is as follows. Part of the ABC transporter complex PstSACB involved in phosphate import. Responsible for energy coupling to the transport system. This chain is Phosphate import ATP-binding protein PstB, found in Mycolicibacterium smegmatis (Mycobacterium smegmatis).